We begin with the raw amino-acid sequence, 365 residues long: Pectate trisaccharide-lyase (365 aa).

An N-terminal signal peptide occupies residues 1–25; sequence MRFSRVVSLVLLLVFTAVLTGAVKA. 3 residues coordinate Ca(2+): Asp-142, Asp-164, and Asp-168. Residues 149–171 form a PbH1 1 repeat; the sequence is SHHIWIDHCTFVNGNDGAVDIKK. Arg-222 is an active-site residue. The stretch at 261–287 is one PbH1 2 repeat; the sequence is GAKVHVEGNYFMGYGAVMAEAGIAFLP.

This sequence belongs to the polysaccharide lyase 1 family. In terms of assembly, homotetramer. It depends on Ca(2+) as a cofactor.

Its subcellular location is the secreted. It catalyses the reaction eliminative cleavage of unsaturated trigalacturonate as the major product from the reducing end of polygalacturonic acid/pectate.. Its function is as follows. Cleaves unsaturated trigalacturonate from pectin. Activity is highest towards polygalacturonic acid, activity on methylated pectins decreases with an increasing degree of methylation. This is Pectate trisaccharide-lyase from Thermotoga sp. (strain RQ2).